The sequence spans 172 residues: Adenine phosphoribosyltransferase (172 aa).

This sequence belongs to the purine/pyrimidine phosphoribosyltransferase family. Homodimer.

The protein resides in the cytoplasm. It carries out the reaction AMP + diphosphate = 5-phospho-alpha-D-ribose 1-diphosphate + adenine. It functions in the pathway purine metabolism; AMP biosynthesis via salvage pathway; AMP from adenine: step 1/1. In terms of biological role, catalyzes a salvage reaction resulting in the formation of AMP, that is energically less costly than de novo synthesis. In Hydrogenovibrio crunogenus (strain DSM 25203 / XCL-2) (Thiomicrospira crunogena), this protein is Adenine phosphoribosyltransferase.